The following is a 421-amino-acid chain: MPKQIDTILINIGQLLTMESSGPRAGKSMQDLHVIEDAVVGIHEQKIVFAGQKGAEAGYEADEIIDCSGRLVTPGLVDPHTHLVFGGSREKEMNLKLQGISYLDILAQGGGILSTVKDTRAASEEELLQKAHFHLQRMLSYGTTTAEVKSGYGLEKETELKQLRVAKKLHESQPVDLVSTFMGAHAIPPEYQNDPDDFLDQMLSLLPEIKEQELASFADIFTETGVFTVSQSRRYLQKAAEAGFGLKIHADEIDPLGGAELAGKLKAVSADHLVGTSDEGIKKLAEAGTIAVLLPGTTFYLGKSTYARARAMIDEGVCVSLATDFNPGSSPTENIQLIMSIAALHLKMTAEEIWHAVTVNAAYAIGKGEEAGQLKAGRSADLVIWQAPNYMYIPYHYGVNHVHQVMKNGTIVVNREGAILG.

The Fe(3+) site is built by His-80 and His-82. Residues His-80 and His-82 each coordinate Zn(2+). 4-imidazolone-5-propanoate contacts are provided by Arg-89, Tyr-152, and His-185. Tyr-152 contributes to the N-formimidoyl-L-glutamate binding site. His-249 is a binding site for Fe(3+). His-249 is a Zn(2+) binding site. Glu-252 contacts 4-imidazolone-5-propanoate. Asp-324 lines the Fe(3+) pocket. Residue Asp-324 coordinates Zn(2+). Residues Asn-326 and Gly-328 each coordinate N-formimidoyl-L-glutamate. 4-imidazolone-5-propanoate is bound at residue Ser-329.

This sequence belongs to the metallo-dependent hydrolases superfamily. HutI family. In terms of assembly, homodimer. Zn(2+) is required as a cofactor. It depends on Fe(3+) as a cofactor.

Its subcellular location is the cytoplasm. The enzyme catalyses 4-imidazolone-5-propanoate + H2O = N-formimidoyl-L-glutamate. The protein operates within amino-acid degradation; L-histidine degradation into L-glutamate; N-formimidoyl-L-glutamate from L-histidine: step 3/3. In terms of biological role, catalyzes the hydrolytic cleavage of the carbon-nitrogen bond in imidazolone-5-propanoate to yield N-formimidoyl-L-glutamate. It is the third step in the universal histidine degradation pathway. This Bacillus subtilis (strain 168) protein is Imidazolonepropionase.